The chain runs to 168 residues: CS3 fimbrial subunit A (168 aa).

The first 22 residues, 1-22, serve as a signal peptide directing secretion; that stretch reads MLKIKYLLIGLSLSAMSSYSLA.

A longer minor form, starting at amino acid 15, has been detected by amino acid sequencing. This is probably due to alternative processing of the signal peptide.

It localises to the fimbrium. Its function is as follows. Fimbriae (also called pili), polar filaments radiating from the surface of the bacterium to a length of 0.5-1.5 micrometers and numbering 100-300 per cell, enable bacteria to colonize the epithelium of specific host organs. This Escherichia coli protein is CS3 fimbrial subunit A.